The sequence spans 349 residues: Small ribosomal subunit biogenesis GTPase RsgA (349 aa).

The span at 1-11 (MSKKKLSKGQQ) shows a compositional bias: basic residues. The interval 1–29 (MSKKKLSKGQQRRVSANHQRRLKKTESKV) is disordered. Positions 102-272 (HSVLTRPDYY…VIDSPGVREF (171 aa)) constitute a CP-type G domain. GTP is bound by residues 158–161 (NKID) and 212–220 (GQSGVGKSS). The Zn(2+) site is built by Cys-296, Cys-301, His-303, and Cys-309.

This sequence belongs to the TRAFAC class YlqF/YawG GTPase family. RsgA subfamily. In terms of assembly, monomer. Associates with 30S ribosomal subunit, binds 16S rRNA. Requires Zn(2+) as cofactor.

It is found in the cytoplasm. Functionally, one of several proteins that assist in the late maturation steps of the functional core of the 30S ribosomal subunit. Helps release RbfA from mature subunits. May play a role in the assembly of ribosomal proteins into the subunit. Circularly permuted GTPase that catalyzes slow GTP hydrolysis, GTPase activity is stimulated by the 30S ribosomal subunit. The polypeptide is Small ribosomal subunit biogenesis GTPase RsgA (Pectobacterium atrosepticum (strain SCRI 1043 / ATCC BAA-672) (Erwinia carotovora subsp. atroseptica)).